We begin with the raw amino-acid sequence, 74 residues long: Translation initiation factor IF-1 (74 aa).

The region spanning 1-72 (MGKEDVIRME…TRGRIVYRKK (72 aa)) is the S1-like domain.

Belongs to the IF-1 family. In terms of assembly, component of the 30S ribosomal translation pre-initiation complex which assembles on the 30S ribosome in the order IF-2 and IF-3, IF-1 and N-formylmethionyl-tRNA(fMet); mRNA recruitment can occur at any time during PIC assembly.

The protein resides in the cytoplasm. One of the essential components for the initiation of protein synthesis. Stabilizes the binding of IF-2 and IF-3 on the 30S subunit to which N-formylmethionyl-tRNA(fMet) subsequently binds. Helps modulate mRNA selection, yielding the 30S pre-initiation complex (PIC). Upon addition of the 50S ribosomal subunit IF-1, IF-2 and IF-3 are released leaving the mature 70S translation initiation complex. In Thermotoga maritima (strain ATCC 43589 / DSM 3109 / JCM 10099 / NBRC 100826 / MSB8), this protein is Translation initiation factor IF-1.